The chain runs to 458 residues: MPN domain-containing protein (458 aa).

The segment at 1–37 is disordered; it reads MGSEPPSSPQVVEEGADEEDEELSGAEDADLRSSSGR. The span at 14–28 shows a compositional bias: acidic residues; the sequence is EGADEEDEELSGAED. Residues 42-137 form the RAMA domain; that stretch reads TRRGITLRVL…QYKTTWLHKY (96 aa). Positions 94, 96, and 116 each coordinate DNA. A disordered region spans residues 147 to 175; sequence SEGEDDEMGDDDEEEGKTTIPVEDKNKKS. Positions 148–161 are enriched in acidic residues; sequence EGEDDEMGDDDEEE. The MPN domain maps to 229–364; the sequence is VAVSSNVLLL…VASTITPFWV (136 aa). Positions 306, 308, and 319 each coordinate Zn(2+). Residues 306–319 carry the JAMM motif motif; sequence HSHPRGPALPSLQD.

Belongs to the peptidase M67 family. In terms of processing, degraded following binding to N(6)-methyladenosine methylated DNA (m6A).

Functionally, probable protease. Acts as a sensor of N(6)-methyladenosine methylation on DNA (m6A): recognizes and binds m6A DNA, leading to its degradation. Binds only double strand DNA (dsDNA) in a sequence-independent manner. In Danio rerio (Zebrafish), this protein is MPN domain-containing protein.